The primary structure comprises 585 residues: MVYLAILLALAHTVGRSAAGAVDSFDYIIVGAGTSGLVVANRLSEDPSVTVAVIEPGTDQRDNINVTSTTAFGNSFGTAIDWAYSTTKQHEAGNKELPLHAGKAWGGTSTINGMTYIRGNVAEFDAWERLGNPGWNWAALLPYFKKSERYHIPTESQLAAGATFESRYHGFDGPLHVGYIPALENGSYAPLVIDTWEGLSVAHNPDLNSGSVRGFGMGPQTLDTGSNVRWDAARAYYHPVEQRSNLRILKGTVKRITWAKGKGKKGTLVANGVEVLNEKGKSTTLAAKTEVVVSAGALRTPLVLEASGIGNPRILKSLGVETQISLPGVGENLVEQPSHFLSFSANLPIAWSAYHAYVTASDIFGANTSAVEAETRANIPRYARAAAEASGAGSVNARAVEKLLQVQHELIFKHNATVAEILISIYGGGFSNYWTLFPFSRGSVHLKSLDHINEPMVDPRIFLADFDLFTLTAAGKFTKRFWFSEPMKTQASVTGPVGLPHNATDEQWHANLRDTVSANSHPIGTAAMMARDLGGVVDKELKVYGTANVRVVDASVIPMQVSGHLTAALYGVAERAADIIKGAAH.

Residue Ala104 participates in FAD binding. His521 functions as the Proton donor in the catalytic mechanism. His564 functions as the Proton acceptor in the catalytic mechanism.

The protein belongs to the GMC oxidoreductase family. In terms of assembly, monomer. Requires FAD as cofactor.

Its function is as follows. Glucose oxidase-like protein; part of the gene cluster that mediates the biosynthesis of the enfumafungin-type antibiotic fuscoatroside. Four enzymes are sufficient to produce fuscoatroside: the terpene cyclase-glycosyl transferase fusion protein fsoAthe cytochrome P450 monoxygenases fsoD and fsoE, and the acetyltransferase fsoF; the cytochrome P450 monooxygenase fsoB and the glucose oxidase-like protein fsoC do not seem to play a role in biosynthesis of fuscoatroside. Functionally, glucose oxidase; part of the gene cluster that mediates the biosynthesis of the enfumafungin-type antibiotic, fuscoatroside. In Humicola fuscoatra, this protein is Glucose oxidase-like protein fsoC.